Reading from the N-terminus, the 308-residue chain is Porphobilinogen deaminase (308 aa).

At cysteine 241 the chain carries S-(dipyrrolylmethanemethyl)cysteine.

This sequence belongs to the HMBS family. As to quaternary structure, monomer. The cofactor is dipyrromethane.

The enzyme catalyses 4 porphobilinogen + H2O = hydroxymethylbilane + 4 NH4(+). The protein operates within porphyrin-containing compound metabolism; protoporphyrin-IX biosynthesis; coproporphyrinogen-III from 5-aminolevulinate: step 2/4. In terms of biological role, tetrapolymerization of the monopyrrole PBG into the hydroxymethylbilane pre-uroporphyrinogen in several discrete steps. The protein is Porphobilinogen deaminase of Staphylococcus aureus (strain MRSA252).